Consider the following 495-residue polypeptide: Probable aspartic-type endopeptidase OPSB (495 aa).

The signal sequence occupies residues 1-19 (MRGDSFIWSLATAIPLLST). The region spanning 73–408 (YFCNLTLGTP…DLDNNEISIA (336 aa)) is the Peptidase A1 domain. Asparagine 76 is a glycosylation site (N-linked (GlcNAc...) asparagine). The active site involves aspartate 91. An N-linked (GlcNAc...) asparagine glycan is attached at asparagine 136. Aspartate 290 is a catalytic residue. Asparagine 413 is a glycosylation site (N-linked (GlcNAc...) asparagine). The disordered stretch occupies residues 447–470 (ATGLPGVETGVPGSRPPSSKAAGQ). Alanine 467 carries the GPI-anchor amidated alanine lipid modification. The propeptide at 468–495 (AGQAKRPDFVLGVAAVGLAGAGMLFAAM) is removed in mature form.

Belongs to the peptidase A1 family.

Its subcellular location is the cell membrane. Functionally, probable GPI-anchored aspartic-type endopeptidase which contributes to virulence. This chain is Probable aspartic-type endopeptidase OPSB (OPSB), found in Arthroderma benhamiae (strain ATCC MYA-4681 / CBS 112371) (Trichophyton mentagrophytes).